The chain runs to 215 residues: 3-isopropylmalate dehydratase small subunit (215 aa).

This sequence belongs to the LeuD family. LeuD type 1 subfamily. In terms of assembly, heterodimer of LeuC and LeuD.

The enzyme catalyses (2R,3S)-3-isopropylmalate = (2S)-2-isopropylmalate. The protein operates within amino-acid biosynthesis; L-leucine biosynthesis; L-leucine from 3-methyl-2-oxobutanoate: step 2/4. Catalyzes the isomerization between 2-isopropylmalate and 3-isopropylmalate, via the formation of 2-isopropylmaleate. This chain is 3-isopropylmalate dehydratase small subunit, found in Saccharophagus degradans (strain 2-40 / ATCC 43961 / DSM 17024).